The sequence spans 339 residues: Glycerol-3-phosphate dehydrogenase [NAD(P)+] (339 aa).

Residues Ser-15, Tyr-16, His-36, and Lys-110 each contribute to the NADPH site. Lys-110, Gly-139, and Thr-141 together coordinate sn-glycerol 3-phosphate. Ala-143 contributes to the NADPH binding site. Sn-glycerol 3-phosphate is bound by residues Lys-195, Asp-248, Ser-258, Arg-259, and Asn-260. Residue Lys-195 is the Proton acceptor of the active site. An NADPH-binding site is contributed by Arg-259. NADPH contacts are provided by Val-283 and Glu-285.

This sequence belongs to the NAD-dependent glycerol-3-phosphate dehydrogenase family.

It is found in the cytoplasm. It carries out the reaction sn-glycerol 3-phosphate + NAD(+) = dihydroxyacetone phosphate + NADH + H(+). It catalyses the reaction sn-glycerol 3-phosphate + NADP(+) = dihydroxyacetone phosphate + NADPH + H(+). Its pathway is membrane lipid metabolism; glycerophospholipid metabolism. Functionally, catalyzes the reduction of the glycolytic intermediate dihydroxyacetone phosphate (DHAP) to sn-glycerol 3-phosphate (G3P), the key precursor for phospholipid synthesis. The protein is Glycerol-3-phosphate dehydrogenase [NAD(P)+] of Pectobacterium carotovorum subsp. carotovorum (strain PC1).